Consider the following 98-residue polypeptide: Integration host factor subunit alpha (98 aa).

Over residues 53–69 (DLREKSERPGRNPKTGE) the composition is skewed to basic and acidic residues. The interval 53–73 (DLREKSERPGRNPKTGEDIPI) is disordered.

It belongs to the bacterial histone-like protein family. In terms of assembly, heterodimer of an alpha and a beta chain.

Its function is as follows. This protein is one of the two subunits of integration host factor, a specific DNA-binding protein that functions in genetic recombination as well as in transcriptional and translational control. The sequence is that of Integration host factor subunit alpha from Aliivibrio salmonicida (strain LFI1238) (Vibrio salmonicida (strain LFI1238)).